Consider the following 129-residue polypeptide: MSTKVENILEELKSLNLLEAAELVNTIEETFDVDASAASGGMMMATPTSAPASAEVEEKTEFDVVLEEVPAPKKISVLKVVRPLTGLGLKEAKDLVESTPKVLKEGASKDDAETMKKQLEDAGATVIVK.

The protein belongs to the bacterial ribosomal protein bL12 family. Homodimer. Part of the ribosomal stalk of the 50S ribosomal subunit. Forms a multimeric L10(L12)X complex, where L10 forms an elongated spine to which 2 to 4 L12 dimers bind in a sequential fashion. Binds GTP-bound translation factors.

The protein localises to the plastid. It localises to the chloroplast. In terms of biological role, forms part of the ribosomal stalk which helps the ribosome interact with GTP-bound translation factors. Is thus essential for accurate translation. In Pyropia yezoensis (Susabi-nori), this protein is Large ribosomal subunit protein bL12c.